Here is an 834-residue protein sequence, read N- to C-terminus: Taste receptor type 1 member 2 (834 aa).

An N-terminal signal peptide occupies residues 1 to 19 (MEPRVRTVCFLFFLLRVLA). The Extracellular portion of the chain corresponds to 20-561 (EPAKNSDFYL…SFLEWHEAAT (542 aa)). 7 N-linked (GlcNAc...) asparagine glycosylation sites follow: Asn84, Asn292, Asn312, Asn363, Asn423, Asn482, and Asn522. Residues 562-582 (IAVALLAALGFLSTLAILVIF) traverse the membrane as a helical segment. At 583–597 (WRHFETPMVRSAGGP) the chain is on the cytoplasmic side. The helical transmembrane segment at 598 to 618 (MCFLMLTLLLVAYMVVPVYVG) threads the bilayer. Residues 619 to 630 (LPKVSTCLCRQA) are Extracellular-facing. Residues 631–651 (LFPVCFTICISCIAVRSFQIV) traverse the membrane as a helical segment. At 652–676 (CVFKMASRFPRAYSYWVRYQGSYVS) the chain is on the cytoplasmic side. Residues 677–697 (VAFITALKMVTVVISLLATGL) form a helical membrane-spanning segment. Residues 698–722 (NPTTRTDTDDPKIMIISCNPNYRNS) are Extracellular-facing. Residues 723-743 (LLFNTSLDLLLSVAGFSFAYM) form a helical membrane-spanning segment. Residues 744 to 755 (GKELPTNYNEAK) lie on the Cytoplasmic side of the membrane. Residues 756 to 776 (FITFSMTFYFTSSVSLCTFMS) traverse the membrane as a helical segment. Over 777-779 (VYD) the chain is Extracellular. A helical transmembrane segment spans residues 780–800 (GVLVTIVDLLVTVFNLLAISL). The Cytoplasmic segment spans residues 801 to 834 (GYFGPKCYMILFYPERNTPAYFNSMIQGYTMRRD).

The protein belongs to the G-protein coupled receptor 3 family. TAS1R subfamily. Forms heterodimers with TAS1R3.

The protein localises to the cell membrane. Its function is as follows. Putative taste receptor. TAS1R2/TAS1R3 recognizes diverse natural and synthetic sweeteners. The protein is Taste receptor type 1 member 2 (TAS1R2) of Saimiri sciureus (Common squirrel monkey).